Here is a 311-residue protein sequence, read N- to C-terminus: MSDLKHLTGLCNIPASNITSILDMAAGYKKKLITPCPSFEPSLQNKRIALVFFENSTRTRFSFEIAARHLGAGTLNFSASSSSVSKGESLSDTIKNLEAMQVDAFVLRHPSSGAADLITRITSKNVINAGDGSHEHPTQALLDMFTLREYFGTIDGLKVIIIGDVLHSRVARSNIYGLITAGAEVGICCPVTLMPPDADQLGITLFTDLDRAIAWADTAIVLRLQLERATGGYLPSLEEYSVHYGLTDERLERVQKHLLVLHPGPINREIEIANNVADRIQPPGYSKSMLLEQVTNGVAVRMAVLNTLLTL.

Positions 58 and 59 each coordinate carbamoyl phosphate. Lys86 contributes to the L-aspartate binding site. Residues Arg108, His136, and Gln139 each coordinate carbamoyl phosphate. Residues Arg169 and Arg223 each coordinate L-aspartate. The carbamoyl phosphate site is built by Gly264 and Pro265.

Belongs to the aspartate/ornithine carbamoyltransferase superfamily. ATCase family. Heterododecamer (2C3:3R2) of six catalytic PyrB chains organized as two trimers (C3), and six regulatory PyrI chains organized as three dimers (R2).

The catalysed reaction is carbamoyl phosphate + L-aspartate = N-carbamoyl-L-aspartate + phosphate + H(+). It functions in the pathway pyrimidine metabolism; UMP biosynthesis via de novo pathway; (S)-dihydroorotate from bicarbonate: step 2/3. In terms of biological role, catalyzes the condensation of carbamoyl phosphate and aspartate to form carbamoyl aspartate and inorganic phosphate, the committed step in the de novo pyrimidine nucleotide biosynthesis pathway. This chain is Aspartate carbamoyltransferase catalytic subunit, found in Pelodictyon phaeoclathratiforme (strain DSM 5477 / BU-1).